Here is a 200-residue protein sequence, read N- to C-terminus: dITP/XTP pyrophosphatase (200 aa).

Residue 5–10 (TRNEGK) participates in substrate binding. Asp-67 acts as the Proton acceptor in catalysis. Asp-67 is a binding site for Mg(2+). Substrate-binding positions include Ser-68, 151–154 (FGYD), Lys-174, and 179–180 (HR).

The protein belongs to the HAM1 NTPase family. As to quaternary structure, homodimer. It depends on Mg(2+) as a cofactor.

The catalysed reaction is XTP + H2O = XMP + diphosphate + H(+). It catalyses the reaction dITP + H2O = dIMP + diphosphate + H(+). The enzyme catalyses ITP + H2O = IMP + diphosphate + H(+). Pyrophosphatase that catalyzes the hydrolysis of nucleoside triphosphates to their monophosphate derivatives, with a high preference for the non-canonical purine nucleotides XTP (xanthosine triphosphate), dITP (deoxyinosine triphosphate) and ITP. Seems to function as a house-cleaning enzyme that removes non-canonical purine nucleotides from the nucleotide pool, thus preventing their incorporation into DNA/RNA and avoiding chromosomal lesions. This Streptococcus pneumoniae serotype 4 (strain ATCC BAA-334 / TIGR4) protein is dITP/XTP pyrophosphatase.